A 329-amino-acid polypeptide reads, in one-letter code: Intradiol ring-cleavage dioxygenase hqdA (329 aa).

Fe cation-binding residues include Y167, Y201, H225, and H227.

The protein belongs to the intradiol ring-cleavage dioxygenase family. Homodimer. It depends on Fe(3+) as a cofactor.

The enzyme catalyses catechol + O2 = cis,cis-muconate + 2 H(+). It catalyses the reaction benzene-1,2,4-triol + O2 = maleylacetate + 2 H(+). Its function is as follows. Intradiol ring-cleavage dioxygenase involved in an alternative pathway to the protocatechuic acid pathway since it is active on hydroxyquinol and catechol but not on protocatechuic acid. This Aspergillus niger (strain ATCC MYA-4892 / CBS 513.88 / FGSC A1513) protein is Intradiol ring-cleavage dioxygenase hqdA.